The following is a 1080-amino-acid chain: Zorya protein ZorD (1080 aa).

The Helicase ATP-binding domain occupies 596-779 (LRSPEETAGC…WSLFDFAQPG (184 aa)). Positions 904–1069 (KLNWLLKILA…DMLCATPDLS (166 aa)) constitute a Helicase C-terminal domain.

Component of antiviral defense system Zorya type I, composed of ZorA, ZorB, ZorC and ZorD. Expression of Zorya type I in E.coli (strain MG1655) confers 10,000-fold resistance to phage SECphi27, 100-fold resistance to lambda, and 10-fold resistance to T7. While most T7 infected Zorya-containing cells undergo abortive infection, a minority produce viable phage progeny. These eventually accumulate to a high multiplicity of infection, leading to culture collapse by 2 hours after initial infection. ZorA and ZorB probably assemble in the cell inner membrane and exert their effect there. This may have ATPase activity. The sequence is that of Zorya protein ZorD from Escherichia coli O139:H28 (strain E24377A / ETEC).